The primary structure comprises 474 residues: MNAVTDLKHDYLVADIKLADWGRKEIAIAETEMPGLMAIRDEFAASQPLKGARIAGSLHMTIQTAVLIETLKALGADVRWASCNIFSTQDHAAAAIAASGTPVFAFKGESLKEYWDFTHRIFEWADGGTPNMILDDGGDATLLLHLGAKAEQDASVIAKPGSEEETFLFAAIKEKLAKDATFYSRNLDAIKGVTEETTTGVHRLYQMAQRGELRFPAINVNDSVTKSKFDNLYGCRESLVDGIKRATDVMIAGKVAVVAGYGDVGKGSAQALRALSAQVWVTEIDPICALQAAMEGYRVVTMDYAAEHGDIFVTCTGNYHVITHDHMAKMKDQAIVCNIGHFDNEIDIASVEQYQWEEIKPQVDHVIFPDGKKIIILAKGRLVNLGCATGHPSYVMSSSFANQTIAQIELWTEAQKGSSKYPVGVYTLPKHLDEKVARLQLKKLNAQLTVLTDKQAAYIGVSKEGPYKADHYRY.

The substrate site is built by T61, D136, and E196. 197-199 (TTT) provides a ligand contact to NAD(+). Positions 226 and 230 each coordinate substrate. NAD(+) is bound by residues N231, 260–265 (GYGDVG), E283, N318, 339–341 (IGH), and N384.

It belongs to the adenosylhomocysteinase family. Requires NAD(+) as cofactor.

It is found in the cytoplasm. The enzyme catalyses S-adenosyl-L-homocysteine + H2O = L-homocysteine + adenosine. It participates in amino-acid biosynthesis; L-homocysteine biosynthesis; L-homocysteine from S-adenosyl-L-homocysteine: step 1/1. Its function is as follows. May play a key role in the regulation of the intracellular concentration of adenosylhomocysteine. This is Adenosylhomocysteinase from Ralstonia nicotianae (strain ATCC BAA-1114 / GMI1000) (Ralstonia solanacearum).